A 490-amino-acid polypeptide reads, in one-letter code: GTPase Der (490 aa).

EngA-type G domains follow at residues 3 to 166 (PVVA…MEDL) and 203 to 376 (IKLA…DSST). GTP contacts are provided by residues 9–16 (GRPNVGKS), 56–60 (DTGGI), 118–121 (NKTD), 209–216 (GRPNVGKS), 256–260 (DTAGV), and 321–324 (NKWD). The region spanning 377-461 (RRVGTSMLTR…PIRIQFKEGE (85 aa)) is the KH-like domain.

It belongs to the TRAFAC class TrmE-Era-EngA-EngB-Septin-like GTPase superfamily. EngA (Der) GTPase family. Associates with the 50S ribosomal subunit.

GTPase that plays an essential role in the late steps of ribosome biogenesis. This Escherichia coli O81 (strain ED1a) protein is GTPase Der.